The primary structure comprises 111 residues: uncharacterized protein (111 aa).

This is an uncharacterized protein from Aquifex aeolicus (strain VF5).